Here is a 526-residue protein sequence, read N- to C-terminus: ESX-1 secretion-associated protein EspB (526 aa).

The segment covering 1 to 23 (MSEELKYELPGLERKAHECESTR) has biased composition (basic and acidic residues). Disordered regions lie at residues 1–35 (MSEELKYELPGLERKAHECESTRPEGPGDATKPDE), 91–110 (RQMNGSDAPPPAAEAVVPDM), and 271–526 (QIQE…GKQQ). The segment covering 303-328 (GGPGGPGSGSGGGSGGGASGGSGGGT) has biased composition (gly residues). Over residues 335–362 (PSTDPSMSPMSTNSAGEEQSSGSPSSGG) the composition is skewed to low complexity. Residues 363 to 387 (SSSGGSPSGGSPSGGGAPSSGGMPE) are compositionally biased toward gly residues. The span at 393 to 405 (DMPGGPDIPGLDD) shows a compositional bias: low complexity. Over residues 413–429 (AGGGGGGGVGGGGGGGM) the composition is skewed to gly residues. A compositionally biased stretch (low complexity) spans 430 to 440 (PAAPLGPAVGA). Positions 451 to 484 (RGGGVGVPTGTGGGAGGMMGGGMGGMGAGHGQGQ) are enriched in gly residues. Residues 485–508 (GKEKKRDPKLAPDEDLYTEDRAHS) are compositionally biased toward basic and acidic residues.

This sequence belongs to the EspB family.

The protein resides in the secreted. Its function is as follows. Involved in DNA conjugation, at least in the recipient strain. This Mycolicibacterium smegmatis (strain MKD8) (Mycobacterium smegmatis) protein is ESX-1 secretion-associated protein EspB.